Consider the following 436-residue polypeptide: Ribosomal protein uS12 methylthiotransferase RimO (436 aa).

One can recognise an MTTase N-terminal domain in the interval 2 to 114; it reads PNLYLVSLGC…IDEMILKKQN (113 aa). [4Fe-4S] cluster is bound by residues Cys11, Cys45, Cys77, Cys146, Cys150, and Cys153. A Radical SAM core domain is found at 132-363; sequence TGSSYHAYIK…IKKQIEGSFK (232 aa). One can recognise a TRAM domain in the interval 363 to 434; that stretch reads KSLVGEVIKV…KDKLIGEIIC (72 aa).

The protein belongs to the methylthiotransferase family. RimO subfamily. It depends on [4Fe-4S] cluster as a cofactor.

Its subcellular location is the cytoplasm. It catalyses the reaction L-aspartate(89)-[ribosomal protein uS12]-hydrogen + (sulfur carrier)-SH + AH2 + 2 S-adenosyl-L-methionine = 3-methylsulfanyl-L-aspartate(89)-[ribosomal protein uS12]-hydrogen + (sulfur carrier)-H + 5'-deoxyadenosine + L-methionine + A + S-adenosyl-L-homocysteine + 2 H(+). Catalyzes the methylthiolation of an aspartic acid residue of ribosomal protein uS12. In Campylobacter fetus subsp. fetus (strain 82-40), this protein is Ribosomal protein uS12 methylthiotransferase RimO.